The primary structure comprises 179 residues: Large ribosomal subunit protein uL6 (179 aa).

Belongs to the universal ribosomal protein uL6 family. In terms of assembly, part of the 50S ribosomal subunit.

This protein binds to the 23S rRNA, and is important in its secondary structure. It is located near the subunit interface in the base of the L7/L12 stalk, and near the tRNA binding site of the peptidyltransferase center. This is Large ribosomal subunit protein uL6 from Syntrophotalea carbinolica (strain DSM 2380 / NBRC 103641 / GraBd1) (Pelobacter carbinolicus).